The following is a 155-amino-acid chain: Endoribonuclease YbeY (155 aa).

A disordered region spans residues 64 to 84 (SFPMDEMRAPGDDEDPPSGLL). Zn(2+) is bound by residues H115, H119, and H125.

The protein belongs to the endoribonuclease YbeY family. It depends on Zn(2+) as a cofactor.

It localises to the cytoplasm. In terms of biological role, single strand-specific metallo-endoribonuclease involved in late-stage 70S ribosome quality control and in maturation of the 3' terminus of the 16S rRNA. The polypeptide is Endoribonuclease YbeY (Cutibacterium acnes (strain DSM 16379 / KPA171202) (Propionibacterium acnes)).